We begin with the raw amino-acid sequence, 305 residues long: Ornithine carbamoyltransferase (305 aa).

Residues 50–53 (STRT), Gln77, Arg101, and 128–131 (HPCQ) each bind carbamoyl phosphate. L-ornithine is bound by residues Asn159, Asp222, and 226 to 227 (SM). Residues 262–263 (CL) and Arg290 contribute to the carbamoyl phosphate site.

The protein belongs to the aspartate/ornithine carbamoyltransferase superfamily. OTCase family.

It localises to the cytoplasm. It carries out the reaction carbamoyl phosphate + L-ornithine = L-citrulline + phosphate + H(+). Its pathway is amino-acid biosynthesis; L-arginine biosynthesis; L-arginine from L-ornithine and carbamoyl phosphate: step 1/3. Functionally, reversibly catalyzes the transfer of the carbamoyl group from carbamoyl phosphate (CP) to the N(epsilon) atom of ornithine (ORN) to produce L-citrulline. The protein is Ornithine carbamoyltransferase of Synechococcus elongatus (strain ATCC 33912 / PCC 7942 / FACHB-805) (Anacystis nidulans R2).